Reading from the N-terminus, the 130-residue chain is Protein ApaG (130 aa).

The ApaG domain maps to 3-127; that stretch reads RALTRDIEVT…FSLDSPGLVR (125 aa).

In Rhizobium meliloti (strain 1021) (Ensifer meliloti), this protein is Protein ApaG.